Consider the following 153-residue polypeptide: ATP synthase subunit b' (153 aa).

A helical membrane pass occupies residues 23–40 (LMAIQVVALTYILNSLFF).

It belongs to the ATPase B chain family. In terms of assembly, F-type ATPases have 2 components, F(1) - the catalytic core - and F(0) - the membrane proton channel. F(1) has five subunits: alpha(3), beta(3), gamma(1), delta(1), epsilon(1). F(0) has four main subunits: a(1), b(1), b'(1) and c(10-14). The alpha and beta chains form an alternating ring which encloses part of the gamma chain. F(1) is attached to F(0) by a central stalk formed by the gamma and epsilon chains, while a peripheral stalk is formed by the delta, b and b' chains.

It is found in the cellular thylakoid membrane. Its function is as follows. F(1)F(0) ATP synthase produces ATP from ADP in the presence of a proton or sodium gradient. F-type ATPases consist of two structural domains, F(1) containing the extramembraneous catalytic core and F(0) containing the membrane proton channel, linked together by a central stalk and a peripheral stalk. During catalysis, ATP synthesis in the catalytic domain of F(1) is coupled via a rotary mechanism of the central stalk subunits to proton translocation. In terms of biological role, component of the F(0) channel, it forms part of the peripheral stalk, linking F(1) to F(0). The b'-subunit is a diverged and duplicated form of b found in plants and photosynthetic bacteria. The protein is ATP synthase subunit b' of Prochlorococcus marinus (strain AS9601).